Consider the following 163-residue polypeptide: MIKFTHLVHHHHDEHHHNEEHAHNATELTICLTMQERTKSRLKVMLSDGSEAGLFLPRGTVLKEHDIVESDDGVQAMITAAEETVSTVYSDDLLLLAKACYHLGNRHVPLQVEAGWCRYLHDHVLDDMVQRLGLNVKVEQAKYQPEPGAYGGSSAGSHDGHHH.

The tract at residues 144–163 is disordered; the sequence is QPEPGAYGGSSAGSHDGHHH.

The protein belongs to the UreE family.

The protein localises to the cytoplasm. Involved in urease metallocenter assembly. Binds nickel. Probably functions as a nickel donor during metallocenter assembly. The sequence is that of Urease accessory protein UreE from Aliivibrio fischeri (strain ATCC 700601 / ES114) (Vibrio fischeri).